We begin with the raw amino-acid sequence, 1204 residues long: Cingulin (1204 aa).

The segment at 7–359 is head; it reads MAEPRGPVDH…VMMSSGSSKA (353 aa). Residues 25–48 form a disordered region; sequence EPVSGAEMGTLRRGGRRPAKDARA. The ZIM signature appears at 48-62; that stretch reads ASTYGVAVRVQGIAG. Residues 54–67 form an interaction with TJP1/ZO1 region; sequence AVRVQGIAGQPFVV. Positions 68-269 are disordered; it reads LNSGEKGGDS…SPLSGLSRAR (202 aa). Phosphoserine occurs at positions 95, 96, 98, 135, 137, 140, 155, and 165. Residues 126 to 140 show a composition bias toward polar residues; it reads TQWNGKLLRSQSQAS. Positions 166 to 190 are enriched in polar residues; sequence PGSTIDTAPLSSVDSLINKFDSQLR. Basic and acidic residues predominate over residues 207–231; it reads EQRKRSKSLDSRLPRDTLEERERQS. A phosphoserine mark is found at Ser-214, Ser-217, Ser-260, Ser-278, Ser-340, and Ser-353. Residues 360–1161 adopt a coiled-coil conformation; the sequence is VAGQGELTRK…SLEKDSWRKA (802 aa). Lys-581 carries the post-translational modification N6-acetyllysine. Residues 1156 to 1182 are disordered; sequence DSWRKASRSAAESTLKHEGLSSDEEFD. A tail region spans residues 1162 to 1204; that stretch reads SRSAAESTLKHEGLSSDEEFDGVYDPSSIASLLTESNLQTSSC. A phosphoserine mark is found at Ser-1176 and Ser-1177.

The protein belongs to the cingulin family. In terms of assembly, homodimer. Interacts with TJP1/ZO1 and SPEF1.

It is found in the cell junction. Its subcellular location is the tight junction. Probably plays a role in the formation and regulation of the tight junction (TJ) paracellular permeability barrier. The polypeptide is Cingulin (Callithrix jacchus (White-tufted-ear marmoset)).